The chain runs to 123 residues: Large ribosomal subunit protein uL24 (123 aa).

The protein belongs to the universal ribosomal protein uL24 family. In terms of assembly, part of the 50S ribosomal subunit.

Its function is as follows. One of two assembly initiator proteins, it binds directly to the 5'-end of the 23S rRNA, where it nucleates assembly of the 50S subunit. Located at the polypeptide exit tunnel on the outside of the subunit. This is Large ribosomal subunit protein uL24 from Pyrobaculum aerophilum (strain ATCC 51768 / DSM 7523 / JCM 9630 / CIP 104966 / NBRC 100827 / IM2).